A 388-amino-acid chain; its full sequence is Na(+)/H(+) antiporter NhaA (388 aa).

Topologically, residues 1-11 are cytoplasmic; it reads MKHLHRFFSSD. A helical transmembrane segment spans residues 12–31; sequence ASGGIILIIAAILAMIMANS. At 32-58 the chain is on the periplasmic side; that stretch reads GATSGWYHDFLETPVQLRVGSLEINKN. Residues 59-80 form a helical membrane-spanning segment; the sequence is MLLWINDALMAVFFLLVGLEVK. The Cytoplasmic portion of the chain corresponds to 81 to 96; it reads RELMQGSLASLLQAAF. The helical transmembrane segment at 97 to 116 threads the bilayer; it reads PVIAAIGGMIVPALLYLAFN. Residues 117–122 are Periplasmic-facing; it reads YADPIT. The chain crosses the membrane as a helical span at residues 123–130; sequence REGWAIPA. The Cytoplasmic segment spans residues 131–154; that stretch reads ATDIAFALGVLALLGSRVPLVLKI. The chain crosses the membrane as a helical span at residues 155 to 176; that stretch reads FLMALAIIDDLGAIIIIALFYT. Residues 177–180 lie on the Periplasmic side of the membrane; it reads NDLS. Residues 181 to 200 form a helical membrane-spanning segment; it reads MASLGVAAVAIAVLAVLNLC. The Cytoplasmic portion of the chain corresponds to 201–204; the sequence is GVRR. Residues 205–222 form a helical membrane-spanning segment; the sequence is TGVYILVGVVLWTAVLKS. Residue glycine 223 is a topological domain, periplasmic. A helical membrane pass occupies residues 224 to 236; that stretch reads VHATLAGVIVGFF. At 237-253 the chain is on the cytoplasmic side; it reads IPLKEKHGRSPAKRLEH. The helical transmembrane segment at 254–272 threads the bilayer; the sequence is VLHPWVAYLILPLFAFANA. Topologically, residues 273-286 are periplasmic; the sequence is GVSLQGVTLDGLTS. A helical transmembrane segment spans residues 287 to 310; that stretch reads ILPLGIIAGLLIGKPLGISLFCWL. The Cytoplasmic segment spans residues 311–339; it reads ALRLKLAHLPEGTTYQQIMVVGILCGIGF. A helical transmembrane segment spans residues 340–350; the sequence is TMSIFIASLAF. Residues 351–357 lie on the Periplasmic side of the membrane; that stretch reads GSVDPEL. A helical transmembrane segment spans residues 358 to 380; the sequence is INWAKLGILVGSISSAVIGYSWL. Over 381–388 the chain is Cytoplasmic; it reads RVRLRPSV.

The protein belongs to the NhaA Na(+)/H(+) (TC 2.A.33) antiporter family.

The protein localises to the cell inner membrane. It catalyses the reaction Na(+)(in) + 2 H(+)(out) = Na(+)(out) + 2 H(+)(in). Functionally, na(+)/H(+) antiporter that extrudes sodium in exchange for external protons. The protein is Na(+)/H(+) antiporter NhaA of Shigella flexneri serotype 5b (strain 8401).